A 186-amino-acid polypeptide reads, in one-letter code: Inner membrane-spanning protein YciB (186 aa).

Transmembrane regions (helical) follow at residues 10 to 30 (IILF…AVAI), 47 to 67 (VEPL…ATLL), 76 to 96 (WKPT…QLVF), 121 to 141 (WGWT…AYNF), and 149 to 169 (FKLF…ALYL).

The protein belongs to the YciB family.

The protein resides in the cell inner membrane. Plays a role in cell envelope biogenesis, maintenance of cell envelope integrity and membrane homeostasis. This is Inner membrane-spanning protein YciB from Acidovorax sp. (strain JS42).